A 150-amino-acid polypeptide reads, in one-letter code: Histone deacetylase complex subunit SAP18 (150 aa).

The protein belongs to the SAP18 family. Forms a complex with SIN3 and histone deacetylase. Interacts with the N-terminal residues of TRL. Interacts with BCD; in vitro and yeast cells.

The protein resides in the nucleus. It is found in the cytoplasm. Involved in the tethering of the SIN3 complex to core histone proteins. Interacts with bicoid (bcd) to repress transcription of bicoid target genes in the anterior tip of the embryo; a process known as retraction. Interacts with Trl and binds to Polycomb response elements at the bithorax complex. May contribute to the regulation of other homeotic gene expressions. In Drosophila melanogaster (Fruit fly), this protein is Histone deacetylase complex subunit SAP18 (Bin1).